Here is a 57-residue protein sequence, read N- to C-terminus: Lantibiotic nisin-Z (57 aa).

A propeptide spanning residues 1 to 23 is cleaved from the precursor; it reads MSTKDFNLDLVSVSKKDSGASPR. Position 25 is a 2,3-didehydrobutyrine (threonine 25). The lanthionine (Ser-Cys) cross-link spans 26-30; sequence SISLC. A 2,3-didehydroalanine (Ser) modification is found at serine 28. 4 consecutive cross-links (beta-methyllanthionine (Thr-Cys)) follow at residues 31 to 34, 36 to 42, 46 to 49, and 48 to 51; these read TPGC, TGALMGC, TATC, and TCNC. Serine 56 is subject to 2,3-didehydroalanine (Ser).

It belongs to the type A lantibiotic family. In terms of processing, maturation of lantibiotics involves the enzymatic conversion of Thr, and Ser into dehydrated AA and the formation of thioether bonds with cysteine. This is followed by membrane translocation and cleavage of the modified precursor. Post-translationally, the structure of the 2,3-didehydrobutyrine is not discussed in PubMed:15361862. It is probably the Z-isomer by similarity.

In terms of biological role, lanthionine-containing peptide antibiotic (lantibiotic) active on Gram-positive bacteria. The bactericidal activity of lantibiotics is based on depolarization of energized bacterial cytoplasmic membranes, initiated by the formation of aqueous transmembrane pores. In Lactococcus lactis subsp. lactis (Streptococcus lactis), this protein is Lantibiotic nisin-Z (nisZ).